Reading from the N-terminus, the 377-residue chain is 23S rRNA (uracil(747)-C(5))-methyltransferase RlmC (377 aa).

Residues cysteine 3, cysteine 11, cysteine 14, and cysteine 87 each contribute to the [4Fe-4S] cluster site. S-adenosyl-L-methionine contacts are provided by glutamine 212, phenylalanine 241, glutamate 262, and asparagine 307. Cysteine 334 (nucleophile) is an active-site residue.

Belongs to the class I-like SAM-binding methyltransferase superfamily. RNA M5U methyltransferase family. RlmC subfamily.

The enzyme catalyses uridine(747) in 23S rRNA + S-adenosyl-L-methionine = 5-methyluridine(747) in 23S rRNA + S-adenosyl-L-homocysteine + H(+). In terms of biological role, catalyzes the formation of 5-methyl-uridine at position 747 (m5U747) in 23S rRNA. In Proteus mirabilis (strain HI4320), this protein is 23S rRNA (uracil(747)-C(5))-methyltransferase RlmC.